Here is a 264-residue protein sequence, read N- to C-terminus: 3-methyl-2-oxobutanoate hydroxymethyltransferase (264 aa).

Residues D45 and D84 each coordinate Mg(2+). 3-methyl-2-oxobutanoate is bound by residues 45–46 (DS), D84, and K112. Mg(2+) is bound at residue E114. The active-site Proton acceptor is the E181.

It belongs to the PanB family. Homodecamer; pentamer of dimers. Mg(2+) is required as a cofactor.

Its subcellular location is the cytoplasm. It catalyses the reaction 3-methyl-2-oxobutanoate + (6R)-5,10-methylene-5,6,7,8-tetrahydrofolate + H2O = 2-dehydropantoate + (6S)-5,6,7,8-tetrahydrofolate. The protein operates within cofactor biosynthesis; (R)-pantothenate biosynthesis; (R)-pantoate from 3-methyl-2-oxobutanoate: step 1/2. Functionally, catalyzes the reversible reaction in which hydroxymethyl group from 5,10-methylenetetrahydrofolate is transferred onto alpha-ketoisovalerate to form ketopantoate. The chain is 3-methyl-2-oxobutanoate hydroxymethyltransferase from Erwinia tasmaniensis (strain DSM 17950 / CFBP 7177 / CIP 109463 / NCPPB 4357 / Et1/99).